The following is a 457-amino-acid chain: tRNA-2-methylthio-N(6)-dimethylallyladenosine synthase (457 aa).

An MTTase N-terminal domain is found at 4 to 119 (RNFHIITFGC…APDAIERLYA (116 aa)). Positions 13, 48, 82, 164, 168, and 171 each coordinate [4Fe-4S] cluster. The region spanning 150–385 (NTLALMAYVN…QATQLEHSTS (236 aa)) is the Radical SAM core domain. The TRAM domain occupies 388–456 (KSRVGVETTV…KHSLVAEPLI (69 aa)).

It belongs to the methylthiotransferase family. MiaB subfamily. As to quaternary structure, monomer. It depends on [4Fe-4S] cluster as a cofactor.

Its subcellular location is the cytoplasm. The enzyme catalyses N(6)-dimethylallyladenosine(37) in tRNA + (sulfur carrier)-SH + AH2 + 2 S-adenosyl-L-methionine = 2-methylsulfanyl-N(6)-dimethylallyladenosine(37) in tRNA + (sulfur carrier)-H + 5'-deoxyadenosine + L-methionine + A + S-adenosyl-L-homocysteine + 2 H(+). Its function is as follows. Catalyzes the methylthiolation of N6-(dimethylallyl)adenosine (i(6)A), leading to the formation of 2-methylthio-N6-(dimethylallyl)adenosine (ms(2)i(6)A) at position 37 in tRNAs that read codons beginning with uridine. This Lawsonia intracellularis (strain PHE/MN1-00) protein is tRNA-2-methylthio-N(6)-dimethylallyladenosine synthase.